Reading from the N-terminus, the 465-residue chain is MHAQRVARDLISGSPDEILGKILSFLPTHHAATTSVLSKRWRNLLPLVDKLELTEDHPSGRCSLGFPDFVEKTLALLDRPCSVIKKVHLNCDHLHGESRFYSWIRTVLERGVLDFHLESSRMYRVETEFFTSNTLVELTISGALYPEGELPPGGLFFPALKRLSIVLVAFADCDMYDDFVLGCPVLEELILYYADDDQPPGWNGKVSSPSIKRLTISHDYPDYPETHIYVWFDTPSLVYLDYSGHVARRYTAEMGSLEEARLNLLPWEQLIDSDEEDDDFDGYGPRWEKRSKDATGLIAMISNVKTLHLSSDSLEVIHSLCKVMPAFQNLLKLSFESDKERGWQVVPLLLNSSPNLETLVIKGLVHKVTSRCGDACLCIRKKTRGECCLLTCQVKVLKIIGYRGTCREQKQMSHFLANLKCLETVKVRVEVDHREDNDASNTYLRITNALMKLPRVSSNCRIHFL.

The region spanning 8 to 54 (RDLISGSPDEILGKILSFLPTHHAATTSVLSKRWRNLLPLVDKLELT) is the F-box domain.

The sequence is that of Putative F-box protein At1g21990 from Arabidopsis thaliana (Mouse-ear cress).